The primary structure comprises 296 residues: HVA22-like protein i (296 aa).

The disordered stretch occupies residues 146 to 296 (STPRPQPPQK…LRKTRSEESR (151 aa)). The span at 180-193 (VSLSSSSSSSSSEN) shows a compositional bias: low complexity. A compositionally biased stretch (polar residues) spans 223–233 (AGTTQIAQKSV). The span at 251 to 261 (QIEEVEGEAES) shows a compositional bias: acidic residues. Residues 270-281 (GPKETVMEETIR) are compositionally biased toward basic and acidic residues.

The protein belongs to the DP1 family.

In Arabidopsis thaliana (Mouse-ear cress), this protein is HVA22-like protein i (HVA22I).